The following is a 105-amino-acid chain: Small ribosomal subunit protein uS10 (105 aa).

It belongs to the universal ribosomal protein uS10 family. Part of the 30S ribosomal subunit.

Its function is as follows. Involved in the binding of tRNA to the ribosomes. This chain is Small ribosomal subunit protein uS10, found in Trichormus variabilis (strain ATCC 29413 / PCC 7937) (Anabaena variabilis).